Consider the following 298-residue polypeptide: Dioxygenase aneA (298 aa).

The Fe cation site is built by histidine 134, aspartate 136, and histidine 213.

It belongs to the PhyH family. In terms of assembly, homodimer. The cofactor is Fe cation.

The catalysed reaction is aculene D + 2-oxoglutarate + O2 = aculene C + succinate + CO2 + H2O. The enzyme catalyses aculene B + 2-oxoglutarate + O2 = aculene A + succinate + CO2 + H2O. Its pathway is secondary metabolite biosynthesis. In terms of biological role, dioxygenase; part of the gene cluster that mediates the biosynthesis of aculenes, a unique type of norsesquiterpenes that contain a nordaucane skeleton linked to an L-proline moiety and are of mixed biosynthetic origin. The pathway begins with the synthesis of dauca-4,7-diene by the terpene cyclase aneC using farnesyl pyrophosphate (FPP) as substrate. The cytochrome P450 monooxygenase aneF then performs the initial oxidation at C-12 of dauca-4,7-diene to yield asperaculane D. Asperaculane D is substrate of the cytochrome P450 monooxygenase aneD for C-10 hydroxylation to yield asperaculane E. The cytochrome P450 monooxygenase aneG then converts asperaculane E into aculene D via C-2 oxidation. The monomodular nonribosomal peptide synthase aneB adenylates L-proline and the thiohydrolase aneE transfers this activated L-proline derivative to aculenes D and C to produce respectively aculenes B and A. The dioxygenase aneA converts aculene D into aculene C, and aculene B into aculene A by introducing the 5,6-alkene moiety. Asperculanes A, B, C and F, as well as 14-prolyl asperculane C, might be shunt products of the pathway. This chain is Dioxygenase aneA, found in Aspergillus aculeatus (strain ATCC 16872 / CBS 172.66 / WB 5094).